Here is a 116-residue protein sequence, read N- to C-terminus: Putative pterin-4-alpha-carbinolamine dehydratase (116 aa).

The protein belongs to the pterin-4-alpha-carbinolamine dehydratase family.

It catalyses the reaction (4aS,6R)-4a-hydroxy-L-erythro-5,6,7,8-tetrahydrobiopterin = (6R)-L-erythro-6,7-dihydrobiopterin + H2O. This is Putative pterin-4-alpha-carbinolamine dehydratase from Microcystis aeruginosa (strain NIES-843 / IAM M-2473).